The following is a 447-amino-acid chain: MATDLQVTTNKLSNKETQLTVKVPVEKIQNKVEGRIRQVAKTAKIDGFRKGNVPMSHIRSQYGAGIQQEVINDVIRDTVFEAIKSEDIRAVGMPNIDDVKLEDDFLVYQATVEIFPEVDVQGINEIEVERHTAKVDEADVDTMIENLQKQREEFVEKKGKADKGNQVTFDFEGSIDGEKFEGGSAEDFKLVIGSNQMIPGFEAGIKGMKAGEEKTIDVTFPEDYQAENLAGKEAQFKINVKLVEKSKLPEIDDAFLELFGVKEGGVEKLKDDVRKNMEREIKNAARSQVKQATFDALLEKNEFDVPNAMLEQEIERQRNMMMQRFSQQFGANADSFDKDMLPNELFEEQALRAARLGIIVARVIDTKGLEVDQARVETFIKEAAENYEDPSEVIEYYTTDKQQRANIESVVLEDQVVDYLIEQGKVTDKEVSYQDLLAAQQQQQQAM.

A PPIase FKBP-type domain is found at Gly164–Pro249.

The protein belongs to the FKBP-type PPIase family. Tig subfamily.

Its subcellular location is the cytoplasm. The enzyme catalyses [protein]-peptidylproline (omega=180) = [protein]-peptidylproline (omega=0). Its function is as follows. Involved in protein export. Acts as a chaperone by maintaining the newly synthesized protein in an open conformation. Functions as a peptidyl-prolyl cis-trans isomerase. The polypeptide is Trigger factor (Psychrobacter cryohalolentis (strain ATCC BAA-1226 / DSM 17306 / VKM B-2378 / K5)).